An 82-amino-acid polypeptide reads, in one-letter code: ATP synthase subunit c (82 aa).

Transmembrane regions (helical) follow at residues 6 to 26 (LGLTCLAAAIGMAIAAAGCGI) and 49 to 69 (IMVTLILGLAFVESLAIYALV).

It belongs to the ATPase C chain family. In terms of assembly, F-type ATPases have 2 components, F(1) - the catalytic core - and F(0) - the membrane proton channel. F(1) has five subunits: alpha(3), beta(3), gamma(1), delta(1), epsilon(1). F(0) has three main subunits: a(1), b(2) and c(10-14). The alpha and beta chains form an alternating ring which encloses part of the gamma chain. F(1) is attached to F(0) by a central stalk formed by the gamma and epsilon chains, while a peripheral stalk is formed by the delta and b chains.

The protein localises to the cell inner membrane. Its function is as follows. F(1)F(0) ATP synthase produces ATP from ADP in the presence of a proton or sodium gradient. F-type ATPases consist of two structural domains, F(1) containing the extramembraneous catalytic core and F(0) containing the membrane proton channel, linked together by a central stalk and a peripheral stalk. During catalysis, ATP synthesis in the catalytic domain of F(1) is coupled via a rotary mechanism of the central stalk subunits to proton translocation. In terms of biological role, key component of the F(0) channel; it plays a direct role in translocation across the membrane. A homomeric c-ring of between 10-14 subunits forms the central stalk rotor element with the F(1) delta and epsilon subunits. In Nitratidesulfovibrio vulgaris (strain ATCC 29579 / DSM 644 / CCUG 34227 / NCIMB 8303 / VKM B-1760 / Hildenborough) (Desulfovibrio vulgaris), this protein is ATP synthase subunit c.